The sequence spans 296 residues: Cell division protein DivIB (296 aa).

Residues 1–25 are Cytoplasmic-facing; sequence MMEDKIIHTPRFDEQRRMRRKKRQR. The helical transmembrane segment at 26-46 threads the bilayer; the sequence is LQLFIFLSIVAIVSLILIYMF. The Extracellular segment spans residues 47–296; it reads TSISYVKKIS…KELNQVKKNS (250 aa). The region spanning 50-118 is the POTRA domain; that stretch reads SYVKKISVND…NTVSINVEEY (69 aa).

It belongs to the FtsQ/DivIB family. DivIB subfamily.

It is found in the cell membrane. Functionally, cell division protein that may be involved in stabilizing or promoting the assembly of the division complex. This chain is Cell division protein DivIB, found in Macrococcus caseolyticus (strain JCSC5402) (Macrococcoides caseolyticum).